The primary structure comprises 395 residues: MRRLFTSESVTEGHPDKVADQISDAILDAMLEQDPRSRVAVETLVTTGIAIVSGEVTTRAYVDIQDIVRKTIMEIGYTRAKYGFDGETCAVLSSIHSQSPDIAMGVDKALEAKEGELNAQDDLELVGAGDQGMMFGYATNETKELMPLPIMLAHKLALKLSEIRKSGTVPFLRPDGKTQVTVEYDENDRPVRVDTVLISTQHEPNVTIAEIKEALVKYVIDPIIPEELRDDNLNILVNPTGRFVLGGPSADTGLTGRKIIVDTYGGAIPHGGGAFSGKDPTKVDRSAHYFARYVAKNVVAAGLADKFMIQVAYAIGKAKPVSVMINTYGTAKIDEDKILKAVLELFDFRPGAIIKKLNLLRPIYKKTAAYGHFGRELEEFTWEKLDMVDELKRLL.

Residue H14 participates in ATP binding. D16 contributes to the Mg(2+) binding site. K(+) is bound at residue E42. L-methionine is bound by residues E55 and Q98. Residues 98 to 108 (QSPDIAMGVDK) form a flexible loop region. ATP is bound by residues 175–177 (DGK), 242–243 (RF), D251, 257–258 (RK), A274, and K278. Residue D251 participates in L-methionine binding. K282 is an L-methionine binding site.

The protein belongs to the AdoMet synthase family. As to quaternary structure, homotetramer; dimer of dimers. It depends on Mg(2+) as a cofactor. K(+) serves as cofactor.

The protein resides in the cytoplasm. The enzyme catalyses L-methionine + ATP + H2O = S-adenosyl-L-methionine + phosphate + diphosphate. Its pathway is amino-acid biosynthesis; S-adenosyl-L-methionine biosynthesis; S-adenosyl-L-methionine from L-methionine: step 1/1. In terms of biological role, catalyzes the formation of S-adenosylmethionine (AdoMet) from methionine and ATP. The overall synthetic reaction is composed of two sequential steps, AdoMet formation and the subsequent tripolyphosphate hydrolysis which occurs prior to release of AdoMet from the enzyme. The protein is S-adenosylmethionine synthase of Thermosipho melanesiensis (strain DSM 12029 / CIP 104789 / BI429).